Consider the following 366-residue polypeptide: MKVEFMQGNQACAKGAIKAGCRFFAGYPITPSTEIAEAMARELPKVGGYYIQMEDEIGSIAAVIGASWGGLKAMTATSGPGFSLMQENIGFAYMTETPCVVVDIQRGGPSTGQPTMASQGDMMQCRWGSHGDYEVIALAPSSVQEMYDFTIMAFNYAEKYRIPVFVMADEIVGHMREKVILHDNIEIINRKKPEEKPCKKPYPFDKLIPEMPVFGEGYNVHITGLTHDERGYPDVSPETHDKLVRRIVNKIRKNKDEIIKWEGENLDAEIVFVCYGSPSRTVKHAVRNLREKGLDVGYIRLITVYPFPDDLLKKLKAKKVVVPEMNLGQIYYEVERVCKKAEEVILVDKIGGELHRPEELERAVLG.

Heterotetramer of the KorA, KorB, KorC and KorD subunits.

It carries out the reaction 2 oxidized [2Fe-2S]-[ferredoxin] + 2-oxoglutarate + CoA = succinyl-CoA + 2 reduced [2Fe-2S]-[ferredoxin] + CO2 + H(+). This Methanocaldococcus jannaschii (strain ATCC 43067 / DSM 2661 / JAL-1 / JCM 10045 / NBRC 100440) (Methanococcus jannaschii) protein is 2-oxoglutarate synthase subunit KorA (korA).